Here is a 117-residue protein sequence, read N- to C-terminus: Large ribosomal subunit protein uL18 (117 aa).

Belongs to the universal ribosomal protein uL18 family. In terms of assembly, part of the 50S ribosomal subunit; part of the 5S rRNA/L5/L18/L25 subcomplex. Contacts the 5S and 23S rRNAs.

Its function is as follows. This is one of the proteins that bind and probably mediate the attachment of the 5S RNA into the large ribosomal subunit, where it forms part of the central protuberance. The polypeptide is Large ribosomal subunit protein uL18 (Tolumonas auensis (strain DSM 9187 / NBRC 110442 / TA 4)).